Consider the following 1092-residue polypeptide: Isoleucine--tRNA ligase (1092 aa).

The 'HIGH' region signature appears at Pro53–His63. Residues Lys613 to Arg617 carry the 'KMSKS' region motif. Residue Lys616 participates in ATP binding.

This sequence belongs to the class-I aminoacyl-tRNA synthetase family. IleS type 2 subfamily. In terms of assembly, monomer. Requires Zn(2+) as cofactor.

It localises to the cytoplasm. It carries out the reaction tRNA(Ile) + L-isoleucine + ATP = L-isoleucyl-tRNA(Ile) + AMP + diphosphate. Its function is as follows. Catalyzes the attachment of isoleucine to tRNA(Ile). As IleRS can inadvertently accommodate and process structurally similar amino acids such as valine, to avoid such errors it has two additional distinct tRNA(Ile)-dependent editing activities. One activity is designated as 'pretransfer' editing and involves the hydrolysis of activated Val-AMP. The other activity is designated 'posttransfer' editing and involves deacylation of mischarged Val-tRNA(Ile). This is Isoleucine--tRNA ligase from Rickettsia peacockii (strain Rustic).